A 130-amino-acid polypeptide reads, in one-letter code: Small ribosomal subunit protein uS8 (130 aa).

This sequence belongs to the universal ribosomal protein uS8 family. As to quaternary structure, part of the 30S ribosomal subunit. Contacts proteins S5 and S12.

In terms of biological role, one of the primary rRNA binding proteins, it binds directly to 16S rRNA central domain where it helps coordinate assembly of the platform of the 30S subunit. This chain is Small ribosomal subunit protein uS8, found in Chromohalobacter salexigens (strain ATCC BAA-138 / DSM 3043 / CIP 106854 / NCIMB 13768 / 1H11).